The following is a 1141-amino-acid chain: Myosin-binding protein C, fast-type (1141 aa).

Positions 1–62 (MPEAKPAAKK…VFLKKPDSVS (62 aa)) are disordered. A compositionally biased stretch (basic and acidic residues) spans 13 to 39 (KGKDAPKGAPKEAPPKEAPAEAPKEAP). 5 Ig-like C2-type domains span residues 50-153 (PTGV…NIDV), 255-344 (SAAF…VKEP), 345-437 (PVLI…VEEK), 438-538 (QLEV…KQEP), and 539-638 (PKIH…VVDV). 2 consecutive Fibronectin type-III domains span residues 641-737 (PPEA…IAPT) and 739-834 (EPLH…IREI). The Ig-like C2-type 6 domain maps to 838-932 (PKIRLPRHLR…ATIRIRVVEK (95 aa)). Residues 935 to 1030 (PPINVMVKEV…SKNTARILKT (96 aa)) enclose the Fibronectin type-III 3 domain. The Ig-like C2-type 7 domain maps to 1048 to 1141 (PKFLTPLIDR…ECKLEVRVPQ (94 aa)).

This sequence belongs to the immunoglobulin superfamily. MyBP family.

Thick filament-associated protein located in the crossbridge region of vertebrate striated muscle a bands. In vitro it binds MHC, F-actin and native thin filaments, and modifies the activity of actin-activated myosin ATPase. It may modulate muscle contraction or may play a more structural role. In Homo sapiens (Human), this protein is Myosin-binding protein C, fast-type (MYBPC2).